Here is a 242-residue protein sequence, read N- to C-terminus: MSKRRIAPLTFLRRLLLRILAALAVFWGGGIALFSVVPVPFSAVMAERQISAWLGGEFGYVAHSDWVSMADISPWMGLAVIAAEDQKFPEHWGFDVPAIEKALAHNERNESRIRGASTLSQQTAKNLFLWDGRSWLRKGLEAGLTLGIETVWSKKRILTVYLNIAEFGDGIFGVEAAAQRYFHKPASRLSVSEAALLAAVLPNPLRYKANAPSGYVRSRQAWIMRQMRQLGGESFMTRNQLN.

Residues 19–39 (ILAALAVFWGGGIALFSVVPV) form a helical membrane-spanning segment.

The protein belongs to the glycosyltransferase 51 family.

It localises to the cell inner membrane. The enzyme catalyses [GlcNAc-(1-&gt;4)-Mur2Ac(oyl-L-Ala-gamma-D-Glu-L-Lys-D-Ala-D-Ala)](n)-di-trans,octa-cis-undecaprenyl diphosphate + beta-D-GlcNAc-(1-&gt;4)-Mur2Ac(oyl-L-Ala-gamma-D-Glu-L-Lys-D-Ala-D-Ala)-di-trans,octa-cis-undecaprenyl diphosphate = [GlcNAc-(1-&gt;4)-Mur2Ac(oyl-L-Ala-gamma-D-Glu-L-Lys-D-Ala-D-Ala)](n+1)-di-trans,octa-cis-undecaprenyl diphosphate + di-trans,octa-cis-undecaprenyl diphosphate + H(+). It participates in cell wall biogenesis; peptidoglycan biosynthesis. In terms of biological role, peptidoglycan polymerase that catalyzes glycan chain elongation from lipid-linked precursors. This Salmonella choleraesuis (strain SC-B67) protein is Biosynthetic peptidoglycan transglycosylase.